A 299-amino-acid chain; its full sequence is Probable xyloglucan endotransglucosylase/hydrolase protein 10 (299 aa).

Residues 1–29 (MTLINRSKPFVLLVGFSIISSLLLWVSQA) form the signal peptide. The GH16 domain occupies 30–225 (SVVSSGDFNK…WSKGPFVASF (196 aa)). N-linked (GlcNAc...) asparagine glycosylation occurs at asparagine 51. Glutamate 111 serves as the catalytic Nucleophile. The Proton donor role is filled by glutamate 115. Xyloglucan contacts are provided by residues glutamate 115, 128 to 130 (QTN), 138 to 140 (NRE), 204 to 205 (SW), and glycine 209. Disulfide bonds link cysteine 233–cysteine 242 and cysteine 280–cysteine 294. Asparagine 238 carries an N-linked (GlcNAc...) asparagine glycan. Arginine 285 provides a ligand contact to xyloglucan.

It belongs to the glycosyl hydrolase 16 family. XTH group 1 subfamily. Contains at least one intrachain disulfide bond essential for its enzymatic activity.

Its subcellular location is the secreted. It is found in the cell wall. The protein resides in the extracellular space. The protein localises to the apoplast. It catalyses the reaction breaks a beta-(1-&gt;4) bond in the backbone of a xyloglucan and transfers the xyloglucanyl segment on to O-4 of the non-reducing terminal glucose residue of an acceptor, which can be a xyloglucan or an oligosaccharide of xyloglucan.. Its function is as follows. Catalyzes xyloglucan endohydrolysis (XEH) and/or endotransglycosylation (XET). Cleaves and religates xyloglucan polymers, an essential constituent of the primary cell wall, and thereby participates in cell wall construction of growing tissues. The chain is Probable xyloglucan endotransglucosylase/hydrolase protein 10 (XTH10) from Arabidopsis thaliana (Mouse-ear cress).